A 296-amino-acid polypeptide reads, in one-letter code: 4-hydroxybenzoate octaprenyltransferase (296 aa).

A run of 8 helical transmembrane segments spans residues 28–48 (IGTL…SDGI), 51–71 (LAVL…GCVI), 102–122 (LLLT…LNHL), 143–163 (FFPI…PMAF), 174–194 (AWIL…VYAM), 212–232 (FGRY…LLMA), 233–253 (VLGA…IVLL), and 274–294 (FLAN…HTFF).

It belongs to the UbiA prenyltransferase family. The cofactor is Mg(2+).

It localises to the cell inner membrane. The catalysed reaction is all-trans-octaprenyl diphosphate + 4-hydroxybenzoate = 4-hydroxy-3-(all-trans-octaprenyl)benzoate + diphosphate. Its pathway is cofactor biosynthesis; ubiquinone biosynthesis. Its function is as follows. Catalyzes the prenylation of para-hydroxybenzoate (PHB) with an all-trans polyprenyl group. Mediates the second step in the final reaction sequence of ubiquinone-8 (UQ-8) biosynthesis, which is the condensation of the polyisoprenoid side chain with PHB, generating the first membrane-bound Q intermediate 3-octaprenyl-4-hydroxybenzoate. The polypeptide is 4-hydroxybenzoate octaprenyltransferase (Neisseria gonorrhoeae (strain ATCC 700825 / FA 1090)).